We begin with the raw amino-acid sequence, 460 residues long: Probable asparagine--tRNA ligase, mitochondrial (460 aa).

The protein belongs to the class-II aminoacyl-tRNA synthetase family.

It localises to the mitochondrion matrix. It catalyses the reaction tRNA(Asn) + L-asparagine + ATP = L-asparaginyl-tRNA(Asn) + AMP + diphosphate + H(+). In Dictyostelium discoideum (Social amoeba), this protein is Probable asparagine--tRNA ligase, mitochondrial (asnS2).